The following is a 232-amino-acid chain: Large ribosomal subunit protein uL1 (232 aa).

The protein belongs to the universal ribosomal protein uL1 family. In terms of assembly, part of the 50S ribosomal subunit.

Its function is as follows. Binds directly to 23S rRNA. The L1 stalk is quite mobile in the ribosome, and is involved in E site tRNA release. In terms of biological role, protein L1 is also a translational repressor protein, it controls the translation of the L11 operon by binding to its mRNA. The protein is Large ribosomal subunit protein uL1 of Xylella fastidiosa (strain M23).